Reading from the N-terminus, the 502-residue chain is Neuronal acetylcholine receptor subunit alpha-7 (502 aa).

The signal sequence occupies residues 1–23 (MGLRALMLWLLAAAGLVRESLQG). Residues 24 to 233 (EFQRKLYKEL…VTMRRRTLYY (210 aa)) are Extracellular-facing. 2 residues coordinate Ca(2+): Arg-42 and Val-44. Residues Asn-46, Asn-90, and Asn-133 are each glycosylated (N-linked (GlcNAc...) asparagine). A disulfide bridge connects residues Cys-150 and Cys-164. Positions 172 and 210 each coordinate Ca(2+). Cys-212 and Cys-213 are joined by a disulfide. Helical transmembrane passes span 234 to 254 (GLNLLIPCVLISALALLVFLL), 262 to 282 (ISLGITVLLSLTVFMLLVAEI), and 295 to 315 (QYFASTMIIVGLSVVVTVIVL). The Cytoplasmic segment spans residues 316-469 (QYHHHDPDGG…WKFAASVVDR (154 aa)). Residues 470–490 (LCLMAFSVFTIICTIGILMSA) form a helical membrane-spanning segment.

This sequence belongs to the ligand-gated ion channel (TC 1.A.9) family. Acetylcholine receptor (TC 1.A.9.1) subfamily. Alpha-7/CHRNA7 sub-subfamily. In terms of assembly, homopentamer. Can also form heteropentamers with CHRNB2, mainly found in basal forebrain cholinergic neurons.

It is found in the postsynaptic cell membrane. The protein localises to the cell membrane. The catalysed reaction is Ca(2+)(in) = Ca(2+)(out). It catalyses the reaction K(+)(in) = K(+)(out). It carries out the reaction Na(+)(in) = Na(+)(out). The enzyme catalyses choline(out) = choline(in). The catalysed reaction is NH4(+)(in) = NH4(+)(out). It catalyses the reaction L-arginine(in) = L-arginine(out). It carries out the reaction guanidine(out) = guanidine(in). Activated by a myriad of ligands such as acetylcholine, cytisine, nicotine, choline and epibatidine. Activity is modulated by positive allosteric modulators (PAMs), such as flavonoids, with a wide range of chemical diversity, pharmacological sensitivity and efficacy. AChR activity is inhibited by the antagonists alpha-conotoxons RgIA, ImI and ImII, small disulfide-constrained peptides from cone snails. In terms of biological role, component of neuronal acetylcholine receptors (nAChRs) that function as pentameric, ligand-gated cation channels with high calcium permeability among other activities. nAChRs are excitatory neurotrasnmitter receptors formed by a collection of nAChR subunits known to mediate synaptic transmission in the nervous system and the neuromuscular junction. Each nAchR subunit confers differential attributes to channel properties, including activation, deactivation and desensitization kinetics, pH sensitivity, cation permeability, and binding to allosteric modulators. CHRNA7 is an homooligomeric neuronal acetylcholine receptor abundantly expressed in the central nervous system. Characterized by a fast desensitization and high calcium permeability. Also expressed in non-neuronal cells such as immune cells like lymphocytes, monocytes and macrophages. This is Neuronal acetylcholine receptor subunit alpha-7 (CHRNA7) from Gallus gallus (Chicken).